Reading from the N-terminus, the 163-residue chain is Succinate dehydrogenase assembly factor 2-B, mitochondrial (163 aa).

Residues 1 to 23 (MFRQLRLTMDISGWIFMPWRRSL) constitute a mitochondrion transit peptide.

This sequence belongs to the SDHAF2 family. Interacts with the flavoprotein subunit within the SDH catalytic dimer.

It is found in the mitochondrion matrix. In terms of biological role, plays an essential role in the assembly of succinate dehydrogenase (SDH), an enzyme complex (also referred to as respiratory complex II) that is a component of both the tricarboxylic acid (TCA) cycle and the mitochondrial electron transport chain, and which couples the oxidation of succinate to fumarate with the reduction of ubiquinone (coenzyme Q) to ubiquinol. Required for flavinylation (covalent attachment of FAD) of the flavoprotein subunit of the SDH catalytic dimer. This Drosophila ananassae (Fruit fly) protein is Succinate dehydrogenase assembly factor 2-B, mitochondrial.